The sequence spans 429 residues: Ribosomal protein uS12 methylthiotransferase RimO (429 aa).

The region spanning 2–118 (HNIFLLSLGC…VLRAIGAEYR (117 aa)) is the MTTase N-terminal domain. Residues cysteine 11, cysteine 47, cysteine 81, cysteine 142, cysteine 146, and cysteine 149 each coordinate [4Fe-4S] cluster. One can recognise a Radical SAM core domain in the interval 128–357 (LTPPHYAFLK…MELQETISQE (230 aa)). The region spanning 360–427 (REFEGNEIVV…PYDLEGEVIG (68 aa)) is the TRAM domain.

It belongs to the methylthiotransferase family. RimO subfamily. [4Fe-4S] cluster serves as cofactor.

The protein localises to the cytoplasm. The catalysed reaction is L-aspartate(89)-[ribosomal protein uS12]-hydrogen + (sulfur carrier)-SH + AH2 + 2 S-adenosyl-L-methionine = 3-methylsulfanyl-L-aspartate(89)-[ribosomal protein uS12]-hydrogen + (sulfur carrier)-H + 5'-deoxyadenosine + L-methionine + A + S-adenosyl-L-homocysteine + 2 H(+). Functionally, catalyzes the methylthiolation of an aspartic acid residue of ribosomal protein uS12. The polypeptide is Ribosomal protein uS12 methylthiotransferase RimO (Chlorobium limicola (strain DSM 245 / NBRC 103803 / 6330)).